The primary structure comprises 714 residues: Nucleolin (714 aa).

The segment at 1-303 (MVKLAKAGKT…AKKQKVEGSE (303 aa)) is disordered. N6-acetyllysine is present on residues Lys9, Lys15, and Lys16. Positions 24-42 (VEEDSEDEEMSEEEDDSSG) are enriched in acidic residues. Ser28, Ser34, Ser40, and Ser41 each carry phosphoserine. The segment covering 55-106 (ATATPAKKVVVSQTKKVAVPTPAKKAAVTPGKKAAATPAKKAVTPAKAVATP) has biased composition (low complexity). Residues 57 to 64 (ATPAKKVV) form repeat 1. The interval 57-134 (ATPAKKVVVS…GAVTPAKGAK (78 aa)) is 8 X 8 AA tandem repeats of X-T-P-X-K-K-X-X. Position 66 is a phosphoserine (Ser66). Residues Thr68, Thr75, Thr83, and Thr91 each carry the phosphothreonine modification. Repeat copies occupy residues 74 to 81 (PTPAKKAA), 82 to 89 (VTPGKKAA), and 90 to 97 (ATPAKKAV). Lys95 is modified (N6-acetyllysine). A Phosphothreonine modification is found at Thr98. The 5; truncated repeat unit spans residues 98 to 103 (TPAKAV). Lys101 is subject to N6-acetyllysine. Repeat 6 spans residues 104–111 (ATPGKKGA). Thr105 is modified (phosphothreonine). Lys108 is subject to N6-acetyllysine. Thr112 carries the phosphothreonine modification. The residue at position 115 (Lys115) is an N6-acetyllysine. A run of 2 repeats spans residues 119–126 (ATPGKKGA) and 127–134 (VTPAKGAK). Residue Thr120 is modified to Phosphothreonine. An N6-acetyllysine modification is found at Lys123. Phosphoserine occurs at positions 144 and 157. A compositionally biased stretch (acidic residues) spans 144–170 (SDEDEDDDDDEDDSDEDEEDEEEDEFE). A compositionally biased stretch (low complexity) spans 171–187 (PPVVKGKQGKVAAAAPA). At Ser188 the chain carries Phosphoserine. Residues 188–216 (SEDEDEEEDEEEEEEDEEEEDDSEEEEAM) are compositionally biased toward acidic residues. Thr219 carries the post-translational modification Phosphothreonine. Residues 240–272 (EEDDDDEEEDEDEEEDEEEEEDEEEEEEEEEEE) are compositionally biased toward acidic residues. Basic and acidic residues predominate over residues 285 to 301 (MTKQKEVPEAKKQKVEG). A Glycyl lysine isopeptide (Lys-Gly) (interchain with G-Cter in SUMO1); alternate cross-link involves residue Lys298. A Glycyl lysine isopeptide (Lys-Gly) (interchain with G-Cter in SUMO2); alternate cross-link involves residue Lys298. Phosphoserine is present on Ser302. RRM domains follow at residues 308 to 384 (FNLF…KPKG) and 394 to 467 (RTLL…YTGE). An N6-acetyllysine modification is found at Lys319. Lys325 participates in a covalent cross-link: Glycyl lysine isopeptide (Lys-Gly) (interchain with G-Cter in SUMO1); alternate. Residue Lys325 forms a Glycyl lysine isopeptide (Lys-Gly) (interchain with G-Cter in SUMO2); alternate linkage. Lys349 carries the post-translational modification N6-acetyllysine. Ser357 bears the Phosphoserine mark. Thr368 carries the post-translational modification Phosphothreonine. Lys371 is covalently cross-linked (Glycyl lysine isopeptide (Lys-Gly) (interchain with G-Cter in SUMO2)). Lys378 is covalently cross-linked (Glycyl lysine isopeptide (Lys-Gly) (interchain with G-Cter in SUMO2); alternate). Residue Lys378 is modified to N6-acetyllysine; alternate. N6-acetyllysine is present on Lys399. Ser402 carries the phosphoserine modification. Thr406 bears the Phosphothreonine mark. Residues Lys428 and Lys445 each carry the N6-acetyllysine modification. 2 positions are modified to phosphoserine: Ser459 and Ser461. 2 positions are modified to N6-acetyllysine: Lys468 and Lys477. The 75-residue stretch at 486 to 560 (KTLVLSNLSY…RTIRLELQGP (75 aa)) folds into the RRM 3 domain. Lys513 participates in a covalent cross-link: Glycyl lysine isopeptide (Lys-Gly) (interchain with G-Cter in SUMO2); alternate. N6-acetyllysine; alternate is present on Lys513. The residue at position 521 (Lys521) is an N6-acetyllysine. Residue Ser563 is modified to Phosphoserine. At Lys572 the chain carries N6-acetyllysine. Residues 572-647 (KTLFVKGLSE…NKVTLDWAKP (76 aa)) form the RRM 4 domain. Lys577 participates in a covalent cross-link: Glycyl lysine isopeptide (Lys-Gly) (interchain with G-Cter in SUMO2); alternate. Lys577 is subject to N6-acetyllysine; alternate. A Phosphoserine modification is found at Ser580. Lys589 is covalently cross-linked (Glycyl lysine isopeptide (Lys-Gly) (interchain with G-Cter in SUMO1); alternate). Lys589 participates in a covalent cross-link: Glycyl lysine isopeptide (Lys-Gly) (interchain with G-Cter in SUMO2); alternate. A phosphoserine mark is found at Ser591 and Ser619. Residue Lys624 forms a Glycyl lysine isopeptide (Lys-Gly) (interchain with G-Cter in SUMO2) linkage. The segment at 642 to 714 (LDWAKPKGEG…KPQGKKTKFE (73 aa)) is disordered. An N6-acetyllysine modification is found at Lys646. The segment covering 650-703 (EGGFGGRGGGRGGFGGRGGGRGGGRGGFGGRGRGGFGGRGGFRGGRGGGGGGGD) has biased composition (gly residues). Residues Arg656, Arg660, Arg666, Arg670, Arg674, Arg680, Arg682, Arg688, and Arg692 each carry the asymmetric dimethylarginine modification. An Asymmetric dimethylarginine; alternate modification is found at Arg695. Arg695 is subject to Omega-N-methylarginine; alternate.

As to quaternary structure, identified in a IGF2BP1-dependent mRNP granule complex containing untranslated mRNAs. Component of the SWAP complex that consists of NPM1, NCL/nucleolin, PARP1 and SWAP70. Component of a complex which is at least composed of HTATSF1/Tat-SF1, the P-TEFb complex components CDK9 and CCNT1, RNA polymerase II, SUPT5H, and NCL/nucleolin. Interacts with AICDA. Interacts with APTX. Interacts with C1QBP. Interacts with ERBB4. Interacts (via C-terminus) with FMR1 isoform 6 (via N-terminus). Interacts with GZF1; this interaction is important for nucleolar localization of GZF1. Interacts with NSUN2. Interacts with NVL. Interacts (via N-terminus domain) with SETX. Interacts (via RRM1 and C-terminal RRM4/Arg/Gly-rich domains) with TERT; the interaction is important for nucleolar localization of TERT. Interacts with WDR46. Interacts with ZFP36. Interacts with LRRC34. Interacts with RRP1B. Interacts with HNRNPU; this interaction occurs during mitosis. Interacts with RIOK1; RIOK1 recruits NCL to PRMT5 for symmetrically methylation. Interacts with ZBTB7B. Interacts with MDK; this interaction promotes NCL clustering and lateral movements of this complex into lipid rafts leading to MDK internalization. Interacts with HDGF. Interacts with ALKBH2. Interacts with IGFBP5; this interaction is necessary for IGFBP5 localization to the nucleus. Interacts with DDX24 (when ubiquitinated); this interaction may be important during ribosome biogenesis. Post-translationally, some glutamate residues are glycylated by TTLL8. This modification occurs exclusively on glutamate residues and results in a glycine chain on the gamma-carboxyl group. In terms of processing, symmetrically methylated by PRMT5.

The protein resides in the nucleus. It is found in the nucleolus. It localises to the cytoplasm. Functionally, nucleolin is the major nucleolar protein of growing eukaryotic cells. It is found associated with intranucleolar chromatin and pre-ribosomal particles. It induces chromatin decondensation by binding to histone H1. It is thought to play a role in pre-rRNA transcription and ribosome assembly. May play a role in the process of transcriptional elongation. Binds RNA oligonucleotides with 5'-UUAGGG-3' repeats more tightly than the telomeric single-stranded DNA 5'-TTAGGG-3' repeats. This is Nucleolin (NCL) from Mesocricetus auratus (Golden hamster).